The primary structure comprises 54 residues: Ovomucoid (54 aa).

Residues 4-54 enclose the Kazal-like domain; the sequence is VDCSEYPKPACTMEHRPLCGSDNQTYDNKCNFCNAVVESNGTLTLSHFGKC. Cystine bridges form between cysteine 6/cysteine 36, cysteine 14/cysteine 33, and cysteine 22/cysteine 54. Asparagine 43 carries an N-linked (GlcNAc...) asparagine glycan.

It localises to the secreted. The sequence is that of Ovomucoid from Guttera pucherani (Eastern crested guineafowl).